The chain runs to 885 residues: Alanine--tRNA ligase (885 aa).

Zn(2+)-binding residues include His-571, His-575, Cys-674, and His-678.

This sequence belongs to the class-II aminoacyl-tRNA synthetase family. Zn(2+) is required as a cofactor.

It is found in the cytoplasm. The enzyme catalyses tRNA(Ala) + L-alanine + ATP = L-alanyl-tRNA(Ala) + AMP + diphosphate. Functionally, catalyzes the attachment of alanine to tRNA(Ala) in a two-step reaction: alanine is first activated by ATP to form Ala-AMP and then transferred to the acceptor end of tRNA(Ala). Also edits incorrectly charged Ser-tRNA(Ala) and Gly-tRNA(Ala) via its editing domain. This chain is Alanine--tRNA ligase, found in Clavibacter sepedonicus (Clavibacter michiganensis subsp. sepedonicus).